A 1388-amino-acid polypeptide reads, in one-letter code: MKDLMTSYSFTEKKRIRKDFGKHRSILKVPFLLAIQVDSYRAFLQGDVESSQRKDIGLHGALKSVFPIVSYSGNAALEYVGYKLGEPMFDERECRQRGMSYGAPLRVTVRLVIYDRESSTKAVKYIKEQEVYLGEIPLMTENGTFIVNGTERVIVSQLHRSPGVFFDHDRGKTHSSGKLLYSARIIPCRGSWLDFEFDPKDALFTRIDRRRKLPVSILLRALGYSNEEILGEFFEINTFHINPDEGVQLELVPERLRGEILSFNLTDGGSVIVEAGKRITARHVKQLEASGISALAVPDEYLIGRILSHDVIDATTGELLASANSEVNEDRIIAFRKAGIESVGTLWVNDLDRGAYLSNTLRIDPTRTQLEAQVEIYRMMRPGEPPTKEAAQNLFHNLFFTFDRYDLSMVGRMKFNRRVGRKEVAGEPVLYDKKYFSDRNDEESRRLVSKLGETSDILDVIKGLCEIRNGRGVVDDIDHLGNRRVRSVGEMAENVFRVGLVRVERAVKERLSMAESEGLTPQELINAKPVAAAIKEFFGSSQLSQFMDQNNPLSEVTHKRRLSALGPGGLTRERAGFEVRDVHLSHYGCLCTIETPEGPNIGLINSLAVFARTNQYGFLETPYRKVVEGRVTDEVEYLSAIEENQYVIAQANTLTDDNGQLTESFVPCRFQGESLLKPPSYVHYMDVSPMQTVSVAAALVPFLEHDDANRALMGANMQRQAVPTLRAQKPLVGTGIERTVARDSGVTVNARRGGVIDQVDAGRIVVKVNESEIIGATDAGVDIYGLIKYTRSNQNTCINQRPLVNVGDIVASGDVLADGPSTDIGELALGQNMLIAFMPWNGYNFEDSILLSERVVEEDRYTTIHIEELTCIARDTKLGSEEISADIPNVSEQALNRLDESGVVYIGAEVRAGDILVGKVTPKGESQLTPEEKLLRAIFGEKASDVKDSSLRVPPGMDGTVIDVQVFTRDGIEKDKRAHQIEEYEIKRVKKDFDDQFRILEGAIYARLRSQIVGKVVNSGVDIKKGEVITDPYLDGLKKSDWFALRMKDEVAVEAIDRAQKQIQAYQKEFDQRFSDKRSKITQGDDLAPGVLKMVKVFLAVKRCIQCGDKMAGRHGNKGVISNVVPVEDMPFMEDGTPVDIVLNPLGVPSRMNIGQILEVHLGWAAKGLGHRIQRMLEANAAIADLRKFLNEIYNHDKSLVGERVDLSQFSDDELLNMAKNLTDGVPMASPVFDGASEQEIKRMLDLAELPAGGQTQLYDGHTGEPFDRKTTVGYMHYLKLNHLVDDKMHARSTGPYSLVTQQPLGGKAQFGGQRFGEMEVWALEAYGAAYTLQEMLTVKSDDVQGRNQMYKNIVDGDHQMVAGMPESFNVLVKEIRSLAINIELEDN.

It belongs to the RNA polymerase beta chain family. In terms of assembly, the RNAP catalytic core consists of 2 alpha, 1 beta, 1 beta' and 1 omega subunit. When a sigma factor is associated with the core the holoenzyme is formed, which can initiate transcription.

It carries out the reaction RNA(n) + a ribonucleoside 5'-triphosphate = RNA(n+1) + diphosphate. In terms of biological role, DNA-dependent RNA polymerase catalyzes the transcription of DNA into RNA using the four ribonucleoside triphosphates as substrates. The protein is DNA-directed RNA polymerase subunit beta of Xylella fastidiosa (strain Temecula1 / ATCC 700964).